A 198-amino-acid chain; its full sequence is tRNA (pseudouridine(54)-N(1))-methyltransferase (198 aa).

S-adenosyl-L-methionine-binding positions include leucine 130, glycine 153, 176–181, and cysteine 186; that span reads LSPLEL.

It belongs to the methyltransferase superfamily. TrmY family. As to quaternary structure, homodimer.

The protein resides in the cytoplasm. It catalyses the reaction pseudouridine(54) in tRNA + S-adenosyl-L-methionine = N(1)-methylpseudouridine(54) in tRNA + S-adenosyl-L-homocysteine + H(+). Functionally, specifically catalyzes the N1-methylation of pseudouridine at position 54 (Psi54) in tRNAs. In Methanococcus maripaludis (strain C7 / ATCC BAA-1331), this protein is tRNA (pseudouridine(54)-N(1))-methyltransferase.